The chain runs to 171 residues: 3-hydroxyanthranilate 3,4-dioxygenase (171 aa).

Residue R44 participates in O2 binding. Fe cation-binding residues include H48, E54, and H92. E54 provides a ligand contact to substrate. Substrate-binding residues include R96 and E106. Residues C121, C126, C160, and C163 each contribute to the a divalent metal cation site.

Belongs to the 3-HAO family. The cofactor is Fe(2+).

The protein resides in the cytoplasm. The enzyme catalyses 3-hydroxyanthranilate + O2 = (2Z,4Z)-2-amino-3-carboxymuconate 6-semialdehyde. Its pathway is cofactor biosynthesis; NAD(+) biosynthesis; quinolinate from L-kynurenine: step 3/3. In terms of biological role, catalyzes the oxidative ring opening of 3-hydroxyanthranilate to 2-amino-3-carboxymuconate semialdehyde, which spontaneously cyclizes to quinolinate. The sequence is that of 3-hydroxyanthranilate 3,4-dioxygenase from Yarrowia lipolytica (strain CLIB 122 / E 150) (Yeast).